The primary structure comprises 104 residues: Flagellar hook-basal body complex protein FliE (104 aa).

This sequence belongs to the FliE family.

The protein resides in the bacterial flagellum basal body. In Salmonella agona (strain SL483), this protein is Flagellar hook-basal body complex protein FliE.